A 210-amino-acid polypeptide reads, in one-letter code: Cell division protein SepF (210 aa).

Residues 13 to 101 form a disordered region; it reads GLADGDEYDE…EPVDPGYRAP (89 aa). 2 stretches are compositionally biased toward basic and acidic residues: residues 22–70 and 83–93; these read EQPR…ERPE and VEPRRPARPEP.

Belongs to the SepF family. As to quaternary structure, homodimer. Interacts with FtsZ.

It localises to the cytoplasm. In terms of biological role, cell division protein that is part of the divisome complex and is recruited early to the Z-ring. Probably stimulates Z-ring formation, perhaps through the cross-linking of FtsZ protofilaments. Its function overlaps with FtsA. This chain is Cell division protein SepF, found in Micrococcus luteus (strain ATCC 4698 / DSM 20030 / JCM 1464 / CCM 169 / CCUG 5858 / IAM 1056 / NBRC 3333 / NCIMB 9278 / NCTC 2665 / VKM Ac-2230) (Micrococcus lysodeikticus).